The sequence spans 260 residues: Ribonuclease HII (260 aa).

The RNase H type-2 domain maps to 75 to 260; it reads ELIAGVDEVG…FEPIKSIIKK (186 aa). 3 residues coordinate a divalent metal cation: Asp81, Glu82, and Asp173.

Belongs to the RNase HII family. Mn(2+) serves as cofactor. The cofactor is Mg(2+).

It is found in the cytoplasm. It carries out the reaction Endonucleolytic cleavage to 5'-phosphomonoester.. Its function is as follows. Endonuclease that specifically degrades the RNA of RNA-DNA hybrids. The protein is Ribonuclease HII of Streptococcus thermophilus (strain CNRZ 1066).